A 584-amino-acid polypeptide reads, in one-letter code: 2-succinyl-5-enolpyruvyl-6-hydroxy-3-cyclohexene-1-carboxylate synthase (584 aa).

Belongs to the TPP enzyme family. MenD subfamily. Homodimer. Mg(2+) is required as a cofactor. The cofactor is Mn(2+). It depends on thiamine diphosphate as a cofactor.

The enzyme catalyses isochorismate + 2-oxoglutarate + H(+) = 5-enolpyruvoyl-6-hydroxy-2-succinyl-cyclohex-3-ene-1-carboxylate + CO2. It participates in quinol/quinone metabolism; 1,4-dihydroxy-2-naphthoate biosynthesis; 1,4-dihydroxy-2-naphthoate from chorismate: step 2/7. It functions in the pathway quinol/quinone metabolism; menaquinone biosynthesis. In terms of biological role, catalyzes the thiamine diphosphate-dependent decarboxylation of 2-oxoglutarate and the subsequent addition of the resulting succinic semialdehyde-thiamine pyrophosphate anion to isochorismate to yield 2-succinyl-5-enolpyruvyl-6-hydroxy-3-cyclohexene-1-carboxylate (SEPHCHC). The protein is 2-succinyl-5-enolpyruvyl-6-hydroxy-3-cyclohexene-1-carboxylate synthase of Bacillus thuringiensis (strain Al Hakam).